The sequence spans 344 residues: Selenide, water dikinase (344 aa).

Residue Cys15 is part of the active site. Residues Lys18 and 46-48 (TKD) each bind ATP. Position 49 (Asp49) interacts with Mg(2+). Residues Asp66, Asp89, and 137-139 (GHS) each bind ATP. Residue Asp89 participates in Mg(2+) binding. Asp225 contributes to the Mg(2+) binding site.

Belongs to the selenophosphate synthase 1 family. Class I subfamily. As to quaternary structure, homodimer. It depends on Mg(2+) as a cofactor.

The enzyme catalyses hydrogenselenide + ATP + H2O = selenophosphate + AMP + phosphate + 2 H(+). Its function is as follows. Synthesizes selenophosphate from selenide and ATP. The chain is Selenide, water dikinase from Colwellia psychrerythraea (strain 34H / ATCC BAA-681) (Vibrio psychroerythus).